Here is a 323-residue protein sequence, read N- to C-terminus: Forkhead transcription factor fkh-6 (323 aa).

The fork-head DNA-binding region spans 21–122 (KPPYSYVALI…DNGNFKRRRV (102 aa)).

Its subcellular location is the nucleus. Its function is as follows. Probable transcription factor. Binds to the DNA sequence motif 5'-[TA]TGTT[TG]T[TG][ATG]TT-3'. Regulates sexual dimorphism in the gonad, promoting male gonadal cell fates in chromosomally (XO) male animals, yet plays a role in gonadogenesis in both sexes; probably acts downstream of terminal regulator of sex determination tra-1, to control early gonadogenesis. Positively modulates expression of homeobox protein egl-5, probably acting indirectly, during early gonadal development. The chain is Forkhead transcription factor fkh-6 from Caenorhabditis elegans.